A 66-amino-acid chain; its full sequence is Large ribosomal subunit protein bL33c (66 aa).

Belongs to the bacterial ribosomal protein bL33 family.

Its subcellular location is the plastid. It is found in the chloroplast. The protein is Large ribosomal subunit protein bL33c of Helianthus annuus (Common sunflower).